Reading from the N-terminus, the 450-residue chain is Methionine aminopeptidase 2 (450 aa).

The disordered stretch occupies residues 1–99 (MAVQAPEVDK…LFPNSQYPEG (99 aa)). Residues 33 to 49 (GDEDAENEESDEDDDQG) show a composition bias toward acidic residues. Residues 60–75 (KKKRKRKPKKKKKKGV) are compositionally biased toward basic residues. Histidine 200 serves as a coordination point for substrate. Aspartate 220, aspartate 231, and histidine 300 together coordinate a divalent metal cation. Residue histidine 308 coordinates substrate. A divalent metal cation is bound by residues glutamate 336 and glutamate 431.

It belongs to the peptidase M24A family. Methionine aminopeptidase eukaryotic type 2 subfamily. Co(2+) is required as a cofactor. It depends on Zn(2+) as a cofactor. Mn(2+) serves as cofactor. Requires Fe(2+) as cofactor.

Its subcellular location is the cytoplasm. It carries out the reaction Release of N-terminal amino acids, preferentially methionine, from peptides and arylamides.. In terms of biological role, cotranslationally removes the N-terminal methionine from nascent proteins. The N-terminal methionine is often cleaved when the second residue in the primary sequence is small and uncharged (Met-Ala-, Cys, Gly, Pro, Ser, Thr, or Val). This chain is Methionine aminopeptidase 2, found in Uncinocarpus reesii (strain UAMH 1704).